The primary structure comprises 274 residues: NAD kinase (274 aa).

Catalysis depends on D59, which acts as the Proton acceptor. NAD(+)-binding positions include 59 to 60 (DG), K64, 128 to 129 (ND), D158, 169 to 174 (TAYALS), and A193.

It belongs to the NAD kinase family. Requires a divalent metal cation as cofactor.

Its subcellular location is the cytoplasm. It carries out the reaction NAD(+) + ATP = ADP + NADP(+) + H(+). Its function is as follows. Involved in the regulation of the intracellular balance of NAD and NADP, and is a key enzyme in the biosynthesis of NADP. Catalyzes specifically the phosphorylation on 2'-hydroxyl of the adenosine moiety of NAD to yield NADP. The protein is NAD kinase of Petrotoga mobilis (strain DSM 10674 / SJ95).